The chain runs to 368 residues: tRNA-specific 2-thiouridylase MnmA (368 aa).

ATP is bound by residues 12 to 19 (GMSGGVDS) and methionine 38. Residues 98–100 (NPD) form an interaction with target base in tRNA region. Cysteine 103 (nucleophile) is an active-site residue. Cysteine 103 and cysteine 200 are joined by a disulfide. ATP is bound at residue glycine 128. The interval 150–152 (KDQ) is interaction with tRNA. Cysteine 200 functions as the Cysteine persulfide intermediate in the catalytic mechanism. The segment at 311 to 312 (RY) is interaction with tRNA.

Belongs to the MnmA/TRMU family.

It localises to the cytoplasm. It catalyses the reaction S-sulfanyl-L-cysteinyl-[protein] + uridine(34) in tRNA + AH2 + ATP = 2-thiouridine(34) in tRNA + L-cysteinyl-[protein] + A + AMP + diphosphate + H(+). Catalyzes the 2-thiolation of uridine at the wobble position (U34) of tRNA, leading to the formation of s(2)U34. The sequence is that of tRNA-specific 2-thiouridylase MnmA from Aeromonas hydrophila subsp. hydrophila (strain ATCC 7966 / DSM 30187 / BCRC 13018 / CCUG 14551 / JCM 1027 / KCTC 2358 / NCIMB 9240 / NCTC 8049).